The sequence spans 385 residues: MYVRHLGLRDFRSWACVDLELHPGRTVFVGPNGYGKTNLIEALWYSTTLGSHRVSADLPLIRVGTDRAVISTIVVNDGRECAVDLEIATGRVNKARLNRSSVRSTRDVVGVLRAVLFAPEDLGLVRGDPADRRRYLDDLAIVRRPAIAAVRAEYERVLRQRTALLKSVPGARYRGDRGVFDTLEVWDSRLAEHGAELVAARIDLVNQLAPEVKKAYQLLAPESRSASIGYRASMDVTGPSEQSDIDRQLLAARLLAALAARRDAELERGVCLVGPHRDDLILRLGDQPAKGFASHGEAWSLAVALRLAAYQLLRVDGGEPVLLLDDVFAELDVMRRRALATAAESAEQVLVTAAVLEDIPAGWDARRVHIDVRADDTGSMSVVLP.

An ATP-binding site is contributed by G30 to T37.

This sequence belongs to the RecF family.

The protein localises to the cytoplasm. Its function is as follows. The RecF protein is involved in DNA metabolism; it is required for DNA replication and normal SOS inducibility. RecF binds preferentially to single-stranded, linear DNA. It also seems to bind ATP. The chain is DNA replication and repair protein RecF from Mycobacterium tuberculosis (strain ATCC 25177 / H37Ra).